The following is a 216-amino-acid chain: Ribosomal RNA large subunit methyltransferase E (216 aa).

5 residues coordinate S-adenosyl-L-methionine: Gly-60, Trp-62, Asp-80, Asp-96, and Asp-121. The active-site Proton acceptor is the Lys-161.

The protein belongs to the class I-like SAM-binding methyltransferase superfamily. RNA methyltransferase RlmE family.

It is found in the cytoplasm. It carries out the reaction uridine(2552) in 23S rRNA + S-adenosyl-L-methionine = 2'-O-methyluridine(2552) in 23S rRNA + S-adenosyl-L-homocysteine + H(+). Its function is as follows. Specifically methylates the uridine in position 2552 of 23S rRNA at the 2'-O position of the ribose in the fully assembled 50S ribosomal subunit. The chain is Ribosomal RNA large subunit methyltransferase E from Pseudomonas fluorescens (strain SBW25).